We begin with the raw amino-acid sequence, 106 residues long: ATP-dependent Clp protease adapter protein ClpS (106 aa).

Residues 1–14 are compositionally biased toward basic and acidic residues; that stretch reads MTDKAGDWQEHGPQ. The disordered stretch occupies residues 1–21; it reads MTDKAGDWQEHGPQVEEAPPQ.

It belongs to the ClpS family. As to quaternary structure, binds to the N-terminal domain of the chaperone ClpA.

Functionally, involved in the modulation of the specificity of the ClpAP-mediated ATP-dependent protein degradation. The sequence is that of ATP-dependent Clp protease adapter protein ClpS from Alkalilimnicola ehrlichii (strain ATCC BAA-1101 / DSM 17681 / MLHE-1).